The chain runs to 274 residues: ATP synthase subunit a (274 aa).

Helical transmembrane passes span Thr43–Phe63, Val103–Leu123, Asp149–Ile169, Leu223–Pro243, and Ala245–Val265.

This sequence belongs to the ATPase A chain family. As to quaternary structure, F-type ATPases have 2 components, CF(1) - the catalytic core - and CF(0) - the membrane proton channel. CF(1) has five subunits: alpha(3), beta(3), gamma(1), delta(1), epsilon(1). CF(0) has three main subunits: a(1), b(2) and c(9-12). The alpha and beta chains form an alternating ring which encloses part of the gamma chain. CF(1) is attached to CF(0) by a central stalk formed by the gamma and epsilon chains, while a peripheral stalk is formed by the delta and b chains.

Its subcellular location is the cell inner membrane. Key component of the proton channel; it plays a direct role in the translocation of protons across the membrane. The sequence is that of ATP synthase subunit a from Yersinia enterocolitica serotype O:8 / biotype 1B (strain NCTC 13174 / 8081).